Reading from the N-terminus, the 211-residue chain is Large ribosomal subunit protein eL13 (211 aa).

K16 carries the post-translational modification N6-acetyllysine. 3 positions are modified to phosphoserine: S52, S77, and S106. Glycyl lysine isopeptide (Lys-Gly) (interchain with G-Cter in SUMO2) cross-links involve residues K123 and K145. K174 is covalently cross-linked (Glycyl lysine isopeptide (Lys-Gly) (interchain with G-Cter in SUMO1); alternate). Glycyl lysine isopeptide (Lys-Gly) (interchain with G-Cter in SUMO2); alternate cross-links involve residues K174 and K177. K177 carries the N6-acetyllysine; alternate modification.

It belongs to the eukaryotic ribosomal protein eL13 family. Component of the 60S large ribosomal subunit (LSU). In terms of tissue distribution, higher levels of expression in benign breast lesions than in carcinomas.

It is found in the cytoplasm. Functionally, component of the ribosome, a large ribonucleoprotein complex responsible for the synthesis of proteins in the cell. The small ribosomal subunit (SSU) binds messenger RNAs (mRNAs) and translates the encoded message by selecting cognate aminoacyl-transfer RNA (tRNA) molecules. The large subunit (LSU) contains the ribosomal catalytic site termed the peptidyl transferase center (PTC), which catalyzes the formation of peptide bonds, thereby polymerizing the amino acids delivered by tRNAs into a polypeptide chain. The nascent polypeptides leave the ribosome through a tunnel in the LSU and interact with protein factors that function in enzymatic processing, targeting, and the membrane insertion of nascent chains at the exit of the ribosomal tunnel. As part of the LSU, it is probably required for its formation and the maturation of rRNAs. Plays a role in bone development. This is Large ribosomal subunit protein eL13 (RPL13) from Homo sapiens (Human).